A 389-amino-acid polypeptide reads, in one-letter code: MTNQTQLSSKTYDTHFAKLTAEQLAENAKKKVIIGMSGGVDSSVSAFILQQQGYQVEGLFMKNWEEDDDTDYCTAAADLADAQAVADKLGMKLHKINFAAEYWDNVFEHFLNEYKAGRTPNPDILCNKEIKFKAFLEYAAEDLGADYIATGHYVRRSGDDNNAQLLRGLDANKDQSYFLYTLSHKQVGQSLFPVGDIEKPIVRQIAEDLGLATAKKKDSTGICFIGERKFKDFLARYLPAQPGEIRTVGGKVVGRHDGLMYHTLGQRKGLGIGGVKGLSEDPFYVVEKDLINNVLVVAQGHDNSALLSSGLIATQLHWVDRQPIRENLRCTVKTRYRQTDIACEIQPIDDDTIRVIFDDPQIAVTPGQSAVFYQGEVCLGGGVIEEQLK.

ATP-binding positions include 35-42 (GMSGGVDS) and Met61. Residues 121–123 (NPD) form an interaction with target base in tRNA region. Cys126 functions as the Nucleophile in the catalytic mechanism. Cysteines 126 and 223 form a disulfide. Residue Gly151 participates in ATP binding. The segment at 173 to 175 (KDQ) is interaction with tRNA. Residue Cys223 is the Cysteine persulfide intermediate of the active site. Positions 335 to 336 (RY) are interaction with tRNA.

This sequence belongs to the MnmA/TRMU family.

Its subcellular location is the cytoplasm. It carries out the reaction S-sulfanyl-L-cysteinyl-[protein] + uridine(34) in tRNA + AH2 + ATP = 2-thiouridine(34) in tRNA + L-cysteinyl-[protein] + A + AMP + diphosphate + H(+). Functionally, catalyzes the 2-thiolation of uridine at the wobble position (U34) of tRNA, leading to the formation of s(2)U34. The protein is tRNA-specific 2-thiouridylase MnmA of Actinobacillus pleuropneumoniae serotype 5b (strain L20).